Here is a 499-residue protein sequence, read N- to C-terminus: Terpentedienyl-diphosphate synthase (499 aa).

Residues D284 and D286 each contribute to the Mg(2+) site. The DXDD motif motif lies at 284–287; it reads DGDD.

This sequence belongs to the terpene synthase family. In terms of assembly, monomer. The cofactor is Mg(2+).

It carries out the reaction (2E,6E,10E)-geranylgeranyl diphosphate = terpentedienyl diphosphate. It functions in the pathway antibiotic biosynthesis. In terms of biological role, involved in the production of the isoprenoid antibiotic terpentecin. Converts geranylgeranyl diphosphate (GGDP) into terpentedienol diphosphate (TDP) by a protonation-initiated cyclization. The sequence is that of Terpentedienyl-diphosphate synthase (cyc1) from Kitasatospora griseola (Streptomyces griseolosporeus).